The primary structure comprises 132 residues: Small ribosomal subunit protein uS8 (132 aa).

It belongs to the universal ribosomal protein uS8 family. In terms of assembly, part of the 30S ribosomal subunit. Contacts proteins S5 and S12.

In terms of biological role, one of the primary rRNA binding proteins, it binds directly to 16S rRNA central domain where it helps coordinate assembly of the platform of the 30S subunit. The chain is Small ribosomal subunit protein uS8 from Lysinibacillus sphaericus (strain C3-41).